We begin with the raw amino-acid sequence, 141 residues long: Large ribosomal subunit protein bL17 (141 aa).

The protein belongs to the bacterial ribosomal protein bL17 family. As to quaternary structure, part of the 50S ribosomal subunit. Contacts protein L32.

This chain is Large ribosomal subunit protein bL17, found in Bartonella bacilliformis (strain ATCC 35685 / KC583 / Herrer 020/F12,63).